The chain runs to 558 residues: Mitochondrial nucleoid-associated protein 1 (558 aa).

Over 1 to 527 (MGAAEPRMEV…VQCNTTIKKS (527 aa)) the chain is Extracellular. 3 disordered regions span residues 29–88 (KMRG…SWTA), 130–205 (LQRV…KLGT), and 222–269 (LSDR…KTQK). Positions 36–45 (SADQNVSQSK) are enriched in polar residues. Residues 51–81 (QKEKSPTRDLTRAKEKELEVDRPKRAVKAET) are compositionally biased toward basic and acidic residues. 2 stretches are compositionally biased toward polar residues: residues 131-144 (QRVT…SDAT) and 187-197 (SSTQPHANPAT). A helical membrane pass occupies residues 528 to 548 (GVGGLTMLFAGYFILCCNWSF). The Cytoplasmic segment spans residues 549–558 (KHLKLQHWRK).

The protein localises to the mitochondrion inner membrane. It is found in the mitochondrion matrix. It localises to the mitochondrion nucleoid. In terms of biological role, critical regulator of mitochondrial DNA (mtDNA) abundance. Binds dsDNA throughout the mitochondrial genome without sequence specificity and controls mtDNA copy number by promoting its replication. Also plays important roles in mitochondrial metabolism and cell proliferation. The polypeptide is Mitochondrial nucleoid-associated protein 1 (Mus musculus (Mouse)).